The primary structure comprises 399 residues: Nicotinate phosphoribosyltransferase (399 aa).

Position 217 is a phosphohistidine; by autocatalysis (His-217).

The protein belongs to the NAPRTase family. Transiently phosphorylated on a His residue during the reaction cycle. Phosphorylation strongly increases the affinity for substrates and increases the rate of nicotinate D-ribonucleotide production. Dephosphorylation regenerates the low-affinity form of the enzyme, leading to product release.

It carries out the reaction nicotinate + 5-phospho-alpha-D-ribose 1-diphosphate + ATP + H2O = nicotinate beta-D-ribonucleotide + ADP + phosphate + diphosphate. Its pathway is cofactor biosynthesis; NAD(+) biosynthesis; nicotinate D-ribonucleotide from nicotinate: step 1/1. In terms of biological role, catalyzes the synthesis of beta-nicotinate D-ribonucleotide from nicotinate and 5-phospho-D-ribose 1-phosphate at the expense of ATP. The chain is Nicotinate phosphoribosyltransferase from Burkholderia orbicola (strain MC0-3).